We begin with the raw amino-acid sequence, 202 residues long: Urease accessory protein UreE (202 aa).

Residues 138-202 (RGAYHSHGGH…HGHHHGHKHD (65 aa)) form a disordered region. Residues 147-193 (HSHDHGHAAHDHGHAAHDHGHNHDHDHGHAHGHDHQHDHNCDHDHDH) show a composition bias toward basic and acidic residues.

The protein belongs to the UreE family.

The protein resides in the cytoplasm. Functionally, involved in urease metallocenter assembly. Binds nickel. Probably functions as a nickel donor during metallocenter assembly. In Rhizobium etli (strain CIAT 652), this protein is Urease accessory protein UreE.